A 519-amino-acid chain; its full sequence is Aldehyde dehydrogenase, mitochondrial (519 aa).

The N-terminal 19 residues, 1–19 (MLRAALSTARRGPRLSRLL), are a transit peptide targeting the mitochondrion. Residues 12 to 26 (GPRLSRLLSAAATSA) carry the SIFI-degron motif. Lys54, Lys75, Lys80, and Lys161 each carry N6-acetyllysine. 264 to 269 (GSTEVG) serves as a coordination point for NAD(+). The active-site Proton acceptor is Glu287. The active-site Nucleophile is Cys321. 8 positions are modified to N6-acetyllysine: Lys370, Lys377, Lys385, Lys409, Lys428, Lys430, Lys443, and Lys453.

It belongs to the aldehyde dehydrogenase family. Homotetramer. In terms of processing, in response to mitochondrial stress, the precursor protein is ubiquitinated by the SIFI complex in the cytoplasm before mitochondrial import, leading to its degradation. Within the SIFI complex, UBR4 initiates ubiquitin chain that are further elongated or branched by KCMF1.

The protein localises to the mitochondrion matrix. The catalysed reaction is an aldehyde + NAD(+) + H2O = a carboxylate + NADH + 2 H(+). It participates in alcohol metabolism; ethanol degradation; acetate from ethanol: step 2/2. Required for clearance of cellular formaldehyde, a cytotoxic and carcinogenic metabolite that induces DNA damage. The sequence is that of Aldehyde dehydrogenase, mitochondrial (Aldh2) from Rattus norvegicus (Rat).